Here is a 202-residue protein sequence, read N- to C-terminus: Imidazoleglycerol-phosphate dehydratase (202 aa).

This sequence belongs to the imidazoleglycerol-phosphate dehydratase family.

It is found in the cytoplasm. It catalyses the reaction D-erythro-1-(imidazol-4-yl)glycerol 3-phosphate = 3-(imidazol-4-yl)-2-oxopropyl phosphate + H2O. The protein operates within amino-acid biosynthesis; L-histidine biosynthesis; L-histidine from 5-phospho-alpha-D-ribose 1-diphosphate: step 6/9. This is Imidazoleglycerol-phosphate dehydratase from Corynebacterium glutamicum (strain ATCC 13032 / DSM 20300 / JCM 1318 / BCRC 11384 / CCUG 27702 / LMG 3730 / NBRC 12168 / NCIMB 10025 / NRRL B-2784 / 534).